The following is a 216-amino-acid chain: LexA repressor (216 aa).

The segment at residues arginine 28–arginine 48 is a DNA-binding region (H-T-H motif). Residues serine 134 and lysine 171 each act as for autocatalytic cleavage activity in the active site.

It belongs to the peptidase S24 family. In terms of assembly, homodimer.

It carries out the reaction Hydrolysis of Ala-|-Gly bond in repressor LexA.. Its function is as follows. Represses a number of genes involved in the response to DNA damage (SOS response), including recA and lexA. In the presence of single-stranded DNA, RecA interacts with LexA causing an autocatalytic cleavage which disrupts the DNA-binding part of LexA, leading to derepression of the SOS regulon and eventually DNA repair. The polypeptide is LexA repressor (Paraburkholderia phytofirmans (strain DSM 17436 / LMG 22146 / PsJN) (Burkholderia phytofirmans)).